The primary structure comprises 200 residues: uncharacterized protein (200 aa).

Positions 1–191 (MTSANIQMAV…LDYKDYVNYK (191 aa)) constitute an AMMECR1 domain.

This is an uncharacterized protein from Caenorhabditis elegans.